A 183-amino-acid polypeptide reads, in one-letter code: MIVGLIGVVEKISALEVHIEVQGVVYGVQVSMRTAALLEAGQKARLKILQVIKEDAHLLYGFLEEGEKILFERLLKINGVGGRIALAILSSFSPNEFESIIATKEVKRLQQVPGIGKKLADKIMVDLIGFFIQDENRPARNEVFLALESLGFKSAEINQVLKTLKPNLSIEAAIKEALQQLRS.

The domain I stretch occupies residues 1-63; the sequence is MIVGLIGVVE…EDAHLLYGFL (63 aa). The interval 64 to 139 is domain II; it reads EEGEKILFER…FFIQDENRPA (76 aa). Residue Ala139 is a region of interest, flexible linker. The interval 139–183 is domain III; the sequence is ARNEVFLALESLGFKSAEINQVLKTLKPNLSIEAAIKEALQQLRS.

The protein belongs to the RuvA family. As to quaternary structure, homotetramer. Forms an RuvA(8)-RuvB(12)-Holliday junction (HJ) complex. HJ DNA is sandwiched between 2 RuvA tetramers; dsDNA enters through RuvA and exits via RuvB. An RuvB hexamer assembles on each DNA strand where it exits the tetramer. Each RuvB hexamer is contacted by two RuvA subunits (via domain III) on 2 adjacent RuvB subunits; this complex drives branch migration. In the full resolvosome a probable DNA-RuvA(4)-RuvB(12)-RuvC(2) complex forms which resolves the HJ.

The protein resides in the cytoplasm. The RuvA-RuvB-RuvC complex processes Holliday junction (HJ) DNA during genetic recombination and DNA repair, while the RuvA-RuvB complex plays an important role in the rescue of blocked DNA replication forks via replication fork reversal (RFR). RuvA specifically binds to HJ cruciform DNA, conferring on it an open structure. The RuvB hexamer acts as an ATP-dependent pump, pulling dsDNA into and through the RuvAB complex. HJ branch migration allows RuvC to scan DNA until it finds its consensus sequence, where it cleaves and resolves the cruciform DNA. In Helicobacter pylori (strain ATCC 700392 / 26695) (Campylobacter pylori), this protein is Holliday junction branch migration complex subunit RuvA.